Here is a 309-residue protein sequence, read N- to C-terminus: Ribonuclease Z (309 aa).

Zn(2+)-binding residues include histidine 63, histidine 65, aspartate 67, histidine 68, histidine 145, aspartate 216, and histidine 274. The active-site Proton acceptor is the aspartate 67.

Belongs to the RNase Z family. In terms of assembly, homodimer. Zn(2+) serves as cofactor.

It carries out the reaction Endonucleolytic cleavage of RNA, removing extra 3' nucleotides from tRNA precursor, generating 3' termini of tRNAs. A 3'-hydroxy group is left at the tRNA terminus and a 5'-phosphoryl group is left at the trailer molecule.. In terms of biological role, zinc phosphodiesterase, which displays some tRNA 3'-processing endonuclease activity. Probably involved in tRNA maturation, by removing a 3'-trailer from precursor tRNA. This Streptococcus pneumoniae (strain 70585) protein is Ribonuclease Z.